A 153-amino-acid polypeptide reads, in one-letter code: MIKSWWAEKSTSEKQIVAALAVLSLGVFCWLGVIKPIDTYIAEHQSHAQKIKKDIKWMQDQASTHGLLGHPALTQPIKNILLEEAKRENLAITLENGPDNTLTIHPVTAPLENVSRWLTTAQVTYGIVIEDLQFTLAGNEEITLRHLSFREQQ.

Over 1 to 16 (MIKSWWAEKSTSEKQI) the chain is Cytoplasmic. Residues 17–37 (VAALAVLSLGVFCWLGVIKPI) form a helical membrane-spanning segment. The Periplasmic portion of the chain corresponds to 38–153 (DTYIAEHQSH…LRHLSFREQQ (116 aa)).

It belongs to the GSP M family. Type II secretion system is composed of four main components: the outer membrane complex, the inner membrane complex, the cytoplasmic secretion ATPase and the periplasm-spanning pseudopilus. Forms homodimers. Interacts with GspL. Interacts with GspE and GspF.

Its subcellular location is the cell inner membrane. Its function is as follows. Inner membrane component of the type II secretion system required for the energy-dependent secretion of extracellular factors such as proteases and toxins from the periplasm. Plays a role in the complex assembly and recruits GspL resulting in a stable complex in the inner membrane. Provides thus a link between the energy-providing GspE protein in the cytoplasm and the rest of the T2SS machinery. The polypeptide is Putative type II secretion system protein M (gspM) (Escherichia coli (strain K12)).